The sequence spans 242 residues: Probable transcriptional regulatory protein XCV3282 (242 aa).

Belongs to the TACO1 family.

It is found in the cytoplasm. The chain is Probable transcriptional regulatory protein XCV3282 from Xanthomonas euvesicatoria pv. vesicatoria (strain 85-10) (Xanthomonas campestris pv. vesicatoria).